Consider the following 422-residue polypeptide: MKHNFSLRLRVFNLNCWDIPYLSKHRADRMKRLGDFLNLESFDLALLEEVWSEQDFQYLKQKLSLTYPDAHYFRSGIIGSGLCVFSRHPIQEIVQHVYTLNGYPYKFYHGDWFCGKAVGLLVLHLSGLVLNAYVTHLHAEYSRQKDIYFAHRVAQAWELAQFIHHTSKKANVVLLCGDLNMHPKDLGCCLLKEWTGLRDAFVETEDFKGSEDGCTMVPKNCYVSQQDLGPFPFGVRIDYVLYKAVSGFHICCKTLKTTTGCDPHNGTPFSDHEALMATLCVKHSPPQEDPCSAHGSAERSALISALREARTELGRGIAQARWWAALFGYVMILGLSLLVLLCVLAAGEEAREVAIMLWTPSVGLVLGAGAVYLFHKQEAKSLCRAQAEIQHVLTRTTETQDLGSEPHPTHCRQQEADRAEEK.

Glutamate 49 is a binding site for Mg(2+). The active-site Proton acceptor is histidine 272. 2 consecutive transmembrane segments (helical) span residues 325–345 (ALFG…CVLA) and 354–374 (AIML…VYLF). The segment at 397 to 422 (TETQDLGSEPHPTHCRQQEADRAEEK) is disordered. The segment covering 412–422 (RQQEADRAEEK) has biased composition (basic and acidic residues).

The protein belongs to the neutral sphingomyelinase family. Mg(2+) serves as cofactor.

The protein localises to the membrane. The catalysed reaction is a sphingomyelin + H2O = phosphocholine + an N-acylsphing-4-enine + H(+). It carries out the reaction 1-O-octadecyl-sn-glycero-3-phosphocholine + H2O = 1-O-octadecyl-sn-glycerol + phosphocholine + H(+). It catalyses the reaction an N-(acyl)-sphingosylphosphocholine + H2O = an N-acyl-sphingoid base + phosphocholine + H(+). The enzyme catalyses 1-hexadecanoyl-sn-glycero-3-phosphocholine + H2O = 1-hexadecanoyl-sn-glycerol + phosphocholine + H(+). The catalysed reaction is a sphingosylphosphocholine + H2O = a sphingoid base + phosphocholine + H(+). It carries out the reaction 1-O-hexadecyl-sn-glycero-3-phosphocholine + H2O = 1-O-hexadecyl-sn-glycerol + phosphocholine + H(+). The protein operates within lipid metabolism; sphingolipid metabolism. Functionally, catalyzes the hydrolysis of sphingomyelin to form ceramide and phosphocholine. Ceramide mediates numerous cellular functions, such as apoptosis and growth arrest, and is capable of regulating these 2 cellular events independently. Also hydrolyzes sphingosylphosphocholine. Hydrolyze 1-acyl-2-lyso-sn-glycero-3-phosphocholine (lyso-PC) and 1-O-alkyl-2-lyso-sn-glycero-3-phosphocholine (lyso-platelet-activating factor). The chain is Sphingomyelin phosphodiesterase 2 (Smpd2) from Rattus norvegicus (Rat).